Reading from the N-terminus, the 764-residue chain is 5-methyltetrahydropteroyltriglutamate--homocysteine methyltransferase (764 aa).

Residues 16–19 (RELK) and lysine 115 contribute to the 5-methyltetrahydropteroyltri-L-glutamate site. L-homocysteine contacts are provided by residues 435–437 (IGS) and glutamate 488. L-methionine is bound by residues 435 to 437 (IGS) and glutamate 488. 5-methyltetrahydropteroyltri-L-glutamate is bound by residues 519-520 (RC) and tryptophan 565. Aspartate 603 contributes to the L-homocysteine binding site. An L-methionine-binding site is contributed by aspartate 603. Glutamate 609 provides a ligand contact to 5-methyltetrahydropteroyltri-L-glutamate. Positions 645, 647, and 669 each coordinate Zn(2+). The Proton donor role is filled by histidine 698. Cysteine 730 serves as a coordination point for Zn(2+).

The protein belongs to the vitamin-B12 independent methionine synthase family. Zn(2+) serves as cofactor.

It carries out the reaction 5-methyltetrahydropteroyltri-L-glutamate + L-homocysteine = tetrahydropteroyltri-L-glutamate + L-methionine. Its pathway is amino-acid biosynthesis; L-methionine biosynthesis via de novo pathway; L-methionine from L-homocysteine (MetE route): step 1/1. Its function is as follows. Catalyzes the transfer of a methyl group from 5-methyltetrahydrofolate to homocysteine resulting in methionine formation. The protein is 5-methyltetrahydropteroyltriglutamate--homocysteine methyltransferase of Burkholderia thailandensis (strain ATCC 700388 / DSM 13276 / CCUG 48851 / CIP 106301 / E264).